The following is a 117-amino-acid chain: Large ribosomal subunit protein bL20 (117 aa).

This sequence belongs to the bacterial ribosomal protein bL20 family.

Its function is as follows. Binds directly to 23S ribosomal RNA and is necessary for the in vitro assembly process of the 50S ribosomal subunit. It is not involved in the protein synthesizing functions of that subunit. The sequence is that of Large ribosomal subunit protein bL20 from Wigglesworthia glossinidia brevipalpis.